The following is a 275-amino-acid chain: Ciliary microtubule inner protein 2B (275 aa).

Disordered regions lie at residues 62–84 (PPIR…RGQE) and 125–169 (EKQG…SPYS). Composition is skewed to basic and acidic residues over residues 71–84 (EVPR…RGQE) and 125–147 (EKQG…KDQV).

This sequence belongs to the CIMIP2 family. As to quaternary structure, microtubule inner protein component of sperm flagellar doublet microtubules. As to expression, expressed in airway epithelial cells.

Its subcellular location is the cytoplasm. The protein resides in the cytoskeleton. It is found in the cilium axoneme. The protein localises to the flagellum axoneme. Functionally, microtubule inner protein (MIP) part of the dynein-decorated doublet microtubules (DMTs) in cilia axoneme, which is required for motile cilia beating. The sequence is that of Ciliary microtubule inner protein 2B from Homo sapiens (Human).